A 183-amino-acid polypeptide reads, in one-letter code: Alkyl hydroperoxide reductase AhpD (183 aa).

C132 acts as the Proton donor in catalysis. A disulfide bridge connects residues C132 and C135. C135 acts as the Cysteine sulfenic acid (-SOH) intermediate in catalysis.

It belongs to the AhpD family.

It catalyses the reaction N(6)-[(R)-dihydrolipoyl]-L-lysyl-[lipoyl-carrier protein] + a hydroperoxide = N(6)-[(R)-lipoyl]-L-lysyl-[lipoyl-carrier protein] + an alcohol + H2O. Its function is as follows. Antioxidant protein with alkyl hydroperoxidase activity. Required for the reduction of the AhpC active site cysteine residues and for the regeneration of the AhpC enzyme activity. The protein is Alkyl hydroperoxide reductase AhpD of Acidobacterium capsulatum (strain ATCC 51196 / DSM 11244 / BCRC 80197 / JCM 7670 / NBRC 15755 / NCIMB 13165 / 161).